The primary structure comprises 119 residues: Ribosome-binding factor A (119 aa).

Belongs to the RbfA family. As to quaternary structure, monomer. Binds 30S ribosomal subunits, but not 50S ribosomal subunits or 70S ribosomes.

Its subcellular location is the cytoplasm. One of several proteins that assist in the late maturation steps of the functional core of the 30S ribosomal subunit. Associates with free 30S ribosomal subunits (but not with 30S subunits that are part of 70S ribosomes or polysomes). Required for efficient processing of 16S rRNA. May interact with the 5'-terminal helix region of 16S rRNA. The protein is Ribosome-binding factor A of Mycoplasmoides gallisepticum (strain R(low / passage 15 / clone 2)) (Mycoplasma gallisepticum).